The sequence spans 758 residues: MSHASRRRWRRATTSAATAALLCGALLTFPSAPAAAQVRLGSGSYTTVLPPGASGPSDHTGAPVAPKVTADFTQPVVTNDWWSSLIFQRYPGNPYGENLYAHPLSFKAQAHGLEVGYPDTPELVADGLKYQYTHSPDFVLGIHGLNAPAAKVAGYSDWTVTADLSDGTRQLRTTIGQGLPFVYADVSGGPIRVEFTAPPTVWRRSGNAVGVTVNGHHYALFAPSGTTWSESDTVFTADVGGSGYASVALLPSPDDFDRYAPYAYSFVTSTTLTYDYDPASATLTSTYRVTTEAREGTAQGTLLALYPHQWKETTTALTDLSYASPRGPMRVVEGDRFTTELTTHGILPSLPTVDSADHQRLRALIDAELHASDPWKGASDTYWTGKALGRLAQLVPIADSIGYTAGRDALLDLLKNKMEDWLTADGPGDNAQFYYDDQWDTLIGFPASFGSNTELNDHDFHYGYFITAAATIARYDRSWISEERWGPMVTTVLRDANNPDRDDERFPWLRSFSPYAGHGWASGHAGFASGNNQESSSEAMHFAASAALLGSLIGDEELRDLGVYLHTTQASAMRRYWQNADGDAFPAGYSHDVVGMVWSDGGDHRIWWDGTPEELYGINYLPITAGSLYLGHDPEHAAAMHQSLVTRLGRQPQVWRDIHWAHQALSDPDAALAAFEAQWQSYEPESGSSKAHTYQWLSTLAEFGTVDTSVTADTPHYAVFRDGDRRTYVAFNPTGQPLTVTFSDGTTLTVPPGQLATG.

Residues 1–34 (MSHASRRRWRRATTSAATAALLCGALLTFPSAPA) constitute a signal peptide (tat-type signal). The tract at residues 38-251 (VRLGSGSYTT…SGYASVALLP (214 aa)) is beta-sandwich subdomain. The GH81 domain maps to 38 to 704 (VRLGSGSYTT…QWLSTLAEFG (667 aa)). The interval 252 to 342 (SPDDFDRYAP…EGDRFTTELT (91 aa)) is alpha/beta subdomain. The interval 352 to 704 (TVDSADHQRL…QWLSTLAEFG (353 aa)) is (alpha/beta)6 barrel subdomain. (1,3-beta-D-glucosyl)n-binding residues include tyrosine 382, lysine 386, aspartate 457, histidine 461, asparagine 532, glutamate 534, and glutamate 538. Aspartate 457 is an active-site residue. Active-site residues include glutamate 534 and glutamate 538.

Belongs to the glycosyl hydrolase 81 family. Post-translationally, predicted to be exported by the Tat system. The position of the signal peptide cleavage has not been experimentally proven.

The protein resides in the secreted. The enzyme catalyses Hydrolysis of (1-&gt;3)-beta-D-glucosidic linkages in (1-&gt;3)-beta-D-glucans.. In terms of biological role, cleaves internal linkages in 1,3-beta-glucan. May contribute to biomass degradation by hydrolyzing the 1,3-beta-linked plant polymer callose that is present in decomposing plant tissue. This chain is Glucan endo-1,3-beta-D-glucosidase, found in Thermobifida fusca (strain YX).